An 86-amino-acid chain; its full sequence is Toxin Cn1 (86 aa).

Residues 1–19 (MNSLLMITACFVLIGTVWA) form the signal peptide. An LCN-type CS-alpha/beta domain is found at 20 to 84 (KDGYLVDAKG…TWPLPNKTCS (65 aa)). 4 disulfides stabilise this stretch: Cys-30–Cys-83, Cys-34–Cys-59, Cys-43–Cys-64, and Cys-47–Cys-66. Ser-84 is subject to Serine amide.

This sequence belongs to the long (4 C-C) scorpion toxin superfamily. Sodium channel inhibitor family. Beta subfamily. Expressed by the venom gland.

Its subcellular location is the secreted. Beta toxins bind voltage-independently at site-4 of sodium channels (Nav) and shift the voltage of activation toward more negative potentials thereby affecting sodium channel activation and promoting spontaneous and repetitive firing. The chain is Toxin Cn1 from Centruroides noxius (Mexican scorpion).